We begin with the raw amino-acid sequence, 331 residues long: Ketol-acid reductoisomerase (NADP(+)) (331 aa).

The 182-residue stretch at 1-182 (MATLYYDTDA…GGTRAGILET (182 aa)) folds into the KARI N-terminal Rossmann domain. Residues 25-28 (YGSQ), serine 51, serine 53, and 83-86 (DEFQ) contribute to the NADP(+) site. Residue histidine 108 is part of the active site. Glycine 134 is a binding site for NADP(+). One can recognise a KARI C-terminal knotted domain in the interval 183-328 (NFKEETETDL…KGLRAMFSWL (146 aa)). Mg(2+)-binding residues include aspartate 191, glutamate 195, glutamate 227, and glutamate 231. Serine 252 serves as a coordination point for substrate.

It belongs to the ketol-acid reductoisomerase family. It depends on Mg(2+) as a cofactor.

It carries out the reaction (2R)-2,3-dihydroxy-3-methylbutanoate + NADP(+) = (2S)-2-acetolactate + NADPH + H(+). The enzyme catalyses (2R,3R)-2,3-dihydroxy-3-methylpentanoate + NADP(+) = (S)-2-ethyl-2-hydroxy-3-oxobutanoate + NADPH + H(+). The protein operates within amino-acid biosynthesis; L-isoleucine biosynthesis; L-isoleucine from 2-oxobutanoate: step 2/4. It participates in amino-acid biosynthesis; L-valine biosynthesis; L-valine from pyruvate: step 2/4. Its function is as follows. Involved in the biosynthesis of branched-chain amino acids (BCAA). Catalyzes an alkyl-migration followed by a ketol-acid reduction of (S)-2-acetolactate (S2AL) to yield (R)-2,3-dihydroxy-isovalerate. In the isomerase reaction, S2AL is rearranged via a Mg-dependent methyl migration to produce 3-hydroxy-3-methyl-2-ketobutyrate (HMKB). In the reductase reaction, this 2-ketoacid undergoes a metal-dependent reduction by NADPH to yield (R)-2,3-dihydroxy-isovalerate. This is Ketol-acid reductoisomerase (NADP(+)) from Synechococcus sp. (strain RCC307).